Reading from the N-terminus, the 423-residue chain is COP9 signalosome complex subunit 3 (423 aa).

Positions 197-365 constitute a PCI domain; the sequence is NFERALYFYE…GMVCFHDNPE (169 aa). A disordered region spans residues 402–423; sequence QFVQKSMGSQEDDSGTKPSSYS.

The protein belongs to the CSN3 family. As to quaternary structure, component of the CSN complex, probably composed of COPS1, COPS2, COPS3, COPS4, COPS5, COPS6, COPS7, COPS8 and COPS9.

The protein resides in the cytoplasm. Its subcellular location is the nucleus. Functionally, component of the COP9 signalosome complex (CSN), a complex involved in various cellular and developmental processes. The CSN complex is an essential regulator of the ubiquitin (Ubl) conjugation pathway by mediating the deneddylation of the cullin subunits of E3 ligase complexes, leading to modify the Ubl ligase activity. The chain is COP9 signalosome complex subunit 3 (COPS3) from Gallus gallus (Chicken).